The chain runs to 316 residues: uncharacterized protein (316 aa).

BNR repeat units follow at residues 62 to 73 (FISDSQGLKFSP), 124 to 135 (KISVDNGLTWSN), 196 to 207 (FISRDGGLTWRV), and 242 to 253 (YFSLDQGRTWNQ).

This is an uncharacterized protein from Saccharomyces cerevisiae (strain ATCC 204508 / S288c) (Baker's yeast).